The sequence spans 157 residues: Endoribonuclease YbeY (157 aa).

Positions 118, 122, and 128 each coordinate Zn(2+).

This sequence belongs to the endoribonuclease YbeY family. Requires Zn(2+) as cofactor.

The protein resides in the cytoplasm. Single strand-specific metallo-endoribonuclease involved in late-stage 70S ribosome quality control and in maturation of the 3' terminus of the 16S rRNA. This is Endoribonuclease YbeY from Shewanella loihica (strain ATCC BAA-1088 / PV-4).